Consider the following 617-residue polypeptide: Dihydroxy-acid dehydratase (617 aa).

Mg(2+) is bound at residue D81. A [2Fe-2S] cluster-binding site is contributed by C122. Mg(2+)-binding residues include D123 and K124. N6-carboxylysine is present on K124. Position 197 (C197) interacts with [2Fe-2S] cluster. E494 provides a ligand contact to Mg(2+). S520 acts as the Proton acceptor in catalysis.

Belongs to the IlvD/Edd family. As to quaternary structure, homodimer. Requires [2Fe-2S] cluster as cofactor. Mg(2+) serves as cofactor.

The catalysed reaction is (2R)-2,3-dihydroxy-3-methylbutanoate = 3-methyl-2-oxobutanoate + H2O. It carries out the reaction (2R,3R)-2,3-dihydroxy-3-methylpentanoate = (S)-3-methyl-2-oxopentanoate + H2O. The protein operates within amino-acid biosynthesis; L-isoleucine biosynthesis; L-isoleucine from 2-oxobutanoate: step 3/4. It participates in amino-acid biosynthesis; L-valine biosynthesis; L-valine from pyruvate: step 3/4. Functions in the biosynthesis of branched-chain amino acids. Catalyzes the dehydration of (2R,3R)-2,3-dihydroxy-3-methylpentanoate (2,3-dihydroxy-3-methylvalerate) into 2-oxo-3-methylpentanoate (2-oxo-3-methylvalerate) and of (2R)-2,3-dihydroxy-3-methylbutanoate (2,3-dihydroxyisovalerate) into 2-oxo-3-methylbutanoate (2-oxoisovalerate), the penultimate precursor to L-isoleucine and L-valine, respectively. The protein is Dihydroxy-acid dehydratase of Parafrankia sp. (strain EAN1pec).